Reading from the N-terminus, the 204-residue chain is Large ribosomal subunit protein uL4 (204 aa).

Residues 49 to 76 are disordered; it reads KTKGISDVSGTTAKPYGQKRTGRARQGS.

Belongs to the universal ribosomal protein uL4 family. In terms of assembly, part of the 50S ribosomal subunit.

Its function is as follows. One of the primary rRNA binding proteins, this protein initially binds near the 5'-end of the 23S rRNA. It is important during the early stages of 50S assembly. It makes multiple contacts with different domains of the 23S rRNA in the assembled 50S subunit and ribosome. Forms part of the polypeptide exit tunnel. The polypeptide is Large ribosomal subunit protein uL4 (Wolbachia pipientis wMel).